Consider the following 120-residue polypeptide: UPF0231 protein YacL (120 aa).

The protein belongs to the UPF0231 family.

The sequence is that of UPF0231 protein YacL (yacL) from Shigella flexneri.